The chain runs to 187 residues: Flavin prenyltransferase UbiX (187 aa).

FMN is bound by residues 9–11 (GAS), Ser34, and Arg123. The dimethylallyl phosphate site is built by Tyr153 and Lys169.

It belongs to the UbiX/PAD1 family.

The enzyme catalyses dimethylallyl phosphate + FMNH2 = prenylated FMNH2 + phosphate. Its function is as follows. Flavin prenyltransferase that catalyzes the synthesis of the prenylated FMN cofactor (prenyl-FMN) for 4-hydroxy-3-polyprenylbenzoic acid decarboxylase UbiD. The prenyltransferase is metal-independent and links a dimethylallyl moiety from dimethylallyl monophosphate (DMAP) to the flavin N5 and C6 atoms of FMN. The protein is Flavin prenyltransferase UbiX of Helicobacter pylori (strain ATCC 700392 / 26695) (Campylobacter pylori).